Reading from the N-terminus, the 142-residue chain is Large ribosomal subunit protein bL17 (142 aa).

The protein belongs to the bacterial ribosomal protein bL17 family. In terms of assembly, part of the 50S ribosomal subunit. Contacts protein L32.

The polypeptide is Large ribosomal subunit protein bL17 (Chlamydia felis (strain Fe/C-56) (Chlamydophila felis)).